Here is a 274-residue protein sequence, read N- to C-terminus: NH(3)-dependent NAD(+) synthetase (274 aa).

46-53 (GISGGQDS) contacts ATP. D52 is a binding site for Mg(2+). R140 serves as a coordination point for deamido-NAD(+). T160 contacts ATP. Position 165 (E165) interacts with Mg(2+). Positions 173 and 180 each coordinate deamido-NAD(+). The ATP site is built by K189 and T211. Residue 260 to 261 (HK) coordinates deamido-NAD(+).

This sequence belongs to the NAD synthetase family. Homodimer.

The enzyme catalyses deamido-NAD(+) + NH4(+) + ATP = AMP + diphosphate + NAD(+) + H(+). The protein operates within cofactor biosynthesis; NAD(+) biosynthesis; NAD(+) from deamido-NAD(+) (ammonia route): step 1/1. Catalyzes the ATP-dependent amidation of deamido-NAD to form NAD. Uses ammonia as a nitrogen source. This is NH(3)-dependent NAD(+) synthetase from Rhodococcus erythropolis (strain PR4 / NBRC 100887).